Reading from the N-terminus, the 235-residue chain is Homeobox protein Nkx-2.8 (235 aa).

Polar residues predominate over residues 51–67; sequence SDESGLETSPADSSQLA. The tract at residues 51 to 86 is disordered; it reads SDESGLETSPADSSQLASLRRESPGSDPEKRRKRRV. Basic and acidic residues predominate over residues 69–80; sequence LRRESPGSDPEK. Positions 81–140 form a DNA-binding region, homeobox; sequence RRKRRVLFSKAQTLELERRFRQQRYLSAPEREQLARLLRLTPTQVKIWFQNHRYKLKRGR.

It belongs to the NK-2 homeobox family. As to expression, prominent expression in ventral brain and neural tube structures.

It localises to the nucleus. Its function is as follows. Possible role in the specification of a distinct subset of neurons. This is Homeobox protein Nkx-2.8 (Nkx2-8) from Mus musculus (Mouse).